The chain runs to 220 residues: Regulatory protein VanRB (220 aa).

One can recognise a Response regulatory domain in the interval 4 to 117; sequence RILLVEDDDH…ILLKRVEALL (114 aa). Aspartate 53 bears the 4-aspartylphosphate mark. The segment at residues 124 to 218 is a DNA-binding region (ompR/PhoB-type); sequence AKEFRVGRLT…IRGVGYRLEE (95 aa).

May be phosphorylated by VanSB. May also be dephosphorylated by VanSB.

It localises to the cytoplasm. Its function is as follows. Member of the two-component regulatory system VanSB/VanRB. Activates the transcription of vanSB, vanYB and vanW in response to vancomycin which results in vancomycin resistance. This is Regulatory protein VanRB (vanRB) from Enterococcus faecalis (strain ATCC 700802 / V583).